Reading from the N-terminus, the 355-residue chain is Magnesium-chelatase subunit ChlI (355 aa).

47–54 (GDRGTGKS) is a binding site for ATP.

It belongs to the Mg-chelatase subunits D/I family.

It is found in the plastid. The protein resides in the chloroplast. The enzyme catalyses protoporphyrin IX + Mg(2+) + ATP + H2O = Mg-protoporphyrin IX + ADP + phosphate + 3 H(+). Its pathway is porphyrin-containing compound metabolism; chlorophyll biosynthesis. Involved in chlorophyll biosynthesis; introduces a magnesium ion into protoporphyrin IX to yield Mg-protoporphyrin IX. The chain is Magnesium-chelatase subunit ChlI (chlI) from Pyropia yezoensis (Susabi-nori).